Reading from the N-terminus, the 98-residue chain is NADH-ubiquinone oxidoreductase chain 4L (98 aa).

Transmembrane regions (helical) follow at residues 1–21 (MTLV…GLLM), 29–49 (SLLC…VTIL), and 61–81 (IILL…LVMV).

Belongs to the complex I subunit 4L family. As to quaternary structure, core subunit of respiratory chain NADH dehydrogenase (Complex I) which is composed of 45 different subunits.

It is found in the mitochondrion inner membrane. The catalysed reaction is a ubiquinone + NADH + 5 H(+)(in) = a ubiquinol + NAD(+) + 4 H(+)(out). Core subunit of the mitochondrial membrane respiratory chain NADH dehydrogenase (Complex I) which catalyzes electron transfer from NADH through the respiratory chain, using ubiquinone as an electron acceptor. Part of the enzyme membrane arm which is embedded in the lipid bilayer and involved in proton translocation. This is NADH-ubiquinone oxidoreductase chain 4L (MT-ND4L) from Rousettus aegyptiacus (Egyptian fruit bat).